The sequence spans 426 residues: Glutamate-1-semialdehyde 2,1-aminomutase (426 aa).

K265 bears the N6-(pyridoxal phosphate)lysine mark.

It belongs to the class-III pyridoxal-phosphate-dependent aminotransferase family. HemL subfamily. Homodimer. The cofactor is pyridoxal 5'-phosphate.

It is found in the cytoplasm. The catalysed reaction is (S)-4-amino-5-oxopentanoate = 5-aminolevulinate. It functions in the pathway porphyrin-containing compound metabolism; protoporphyrin-IX biosynthesis; 5-aminolevulinate from L-glutamyl-tRNA(Glu): step 2/2. The sequence is that of Glutamate-1-semialdehyde 2,1-aminomutase from Actinobacillus pleuropneumoniae serotype 5b (strain L20).